The sequence spans 440 residues: Origin recognition complex subunit 4 (440 aa).

64 to 71 lines the ATP pocket; that stretch reads GPKGSGKS.

It belongs to the ORC4 family. As to quaternary structure, ORC is composed of six subunits.

Its subcellular location is the nucleus. Component of the origin recognition complex (ORC) that binds origins of replication. DNA-binding is ATP-dependent, however specific DNA sequences that define origins of replication have not been identified so far. ORC is required to assemble the pre-replication complex necessary to initiate DNA replication. The sequence is that of Origin recognition complex subunit 4 (orcD) from Dictyostelium discoideum (Social amoeba).